Here is a 215-residue protein sequence, read N- to C-terminus: MTTQRHYSPIDRLLLQADMAMRTLLPFSGQPYRPSPAIVQPDAQMSETETRHVAGLMRINHTGEVCAQALYQGQALTAKLPQVRAAMEHAAEEEIDHLAWCEQRIRQLGSHPSVLNPLFYGLSFGIGAAAGLISDKVSLGFVAATEHQVCKHLDEHLEQLPAEDEKSRAILEQMRIDEEHHAESALDAGGFRFPAPVRFGMSLLAKVMTKSTYRI.

Residues E64, E94, H97, E146, E178, and H181 each contribute to the Fe cation site.

Belongs to the COQ7 family. It depends on Fe cation as a cofactor.

The protein localises to the cell membrane. The catalysed reaction is a 5-methoxy-2-methyl-3-(all-trans-polyprenyl)benzene-1,4-diol + AH2 + O2 = a 3-demethylubiquinol + A + H2O. Its pathway is cofactor biosynthesis; ubiquinone biosynthesis. Catalyzes the hydroxylation of 2-nonaprenyl-3-methyl-6-methoxy-1,4-benzoquinol during ubiquinone biosynthesis. The sequence is that of 3-demethoxyubiquinol 3-hydroxylase from Pseudomonas fluorescens (strain SBW25).